The primary structure comprises 354 residues: NADH-quinone oxidoreductase subunit H (354 aa).

The next 8 membrane-spanning stretches (helical) occupy residues 23–43, 91–111, 124–144, 162–182, 203–223, 250–270, 291–311, and 330–350; these read LVRA…LILW, YIIA…VIPF, LLYV…AGWA, ISYE…TGSL, ILSW…ISGV, GMAF…ISAL, IPGF…FIWL, and IFIP…VSPW.

It belongs to the complex I subunit 1 family. As to quaternary structure, NDH-1 is composed of 14 different subunits. Subunits NuoA, H, J, K, L, M, N constitute the membrane sector of the complex.

It is found in the cell inner membrane. It carries out the reaction a quinone + NADH + 5 H(+)(in) = a quinol + NAD(+) + 4 H(+)(out). Functionally, NDH-1 shuttles electrons from NADH, via FMN and iron-sulfur (Fe-S) centers, to quinones in the respiratory chain. The immediate electron acceptor for the enzyme in this species is believed to be ubiquinone. Couples the redox reaction to proton translocation (for every two electrons transferred, four hydrogen ions are translocated across the cytoplasmic membrane), and thus conserves the redox energy in a proton gradient. This subunit may bind ubiquinone. This Ralstonia pickettii (strain 12J) protein is NADH-quinone oxidoreductase subunit H.